Here is a 1863-residue protein sequence, read N- to C-terminus: Breast cancer type 1 susceptibility protein homolog (1863 aa).

Met1 carries the post-translational modification N-acetylmethionine. The segment at 24–65 (CPICLELIKEPVSTKCDHIFCRFCMLKLLNQKKGPSQCPLCK) adopts an RING-type zinc-finger fold. Lys109 participates in a covalent cross-link: Glycyl lysine isopeptide (Lys-Gly) (interchain with G-Cter in SUMO2). At Ser114 the chain carries Phosphoserine. Composition is skewed to basic and acidic residues over residues 231 to 240 (KDITNTEHHQ) and 248 to 260 (TTEK…HPEK). The interval 231–266 (KDITNTEHHQSSNNDLNTTEKHATERHPEKYQGSSV) is disordered. Lys300 is covalently cross-linked (Glycyl lysine isopeptide (Lys-Gly) (interchain with G-Cter in SUMO2)). Residues 305 to 336 (NKSKQPGLARSQHNRWTGSKETCNDRQTPSTE) are disordered. Polar residues predominate over residues 318-334 (NRWTGSKETCNDRQTPS). Lys338 is covalently cross-linked (Glycyl lysine isopeptide (Lys-Gly) (interchain with G-Cter in SUMO2)). Phosphoserine is present on residues Ser394, Ser397, Ser422, and Ser433. Residues Lys442, Lys458, and Lys518 each participate in a glycyl lysine isopeptide (Lys-Gly) (interchain with G-Cter in SUMO2) cross-link. The residue at position 550 (Ser550) is a Phosphoserine. A Glycyl lysine isopeptide (Lys-Gly) (interchain with G-Cter in SUMO2) cross-link involves residue Lys582. The tract at residues 653-699 (NYNQMPVRHSRNLQLMEDKESATGAKKSNKPNEQTSKRHASDTFPEL) is disordered. Phosphoserine is present on residues Ser693, Ser707, and Ser724. Glycyl lysine isopeptide (Lys-Gly) (interchain with G-Cter in SUMO2) cross-links involve residues Lys733 and Lys738. Ser752 and Ser839 each carry phosphoserine. The tract at residues 886–914 (AHSRSLKKQSPKVTSECEQKEENQGKKES) is disordered. The segment covering 900–914 (SECEQKEENQGKKES) has biased composition (basic and acidic residues). Residues Lys917 and Lys986 each participate in a glycyl lysine isopeptide (Lys-Gly) (interchain with G-Cter in SUMO2) cross-link. Residue Ser987 is modified to Phosphoserine; by CHEK2. At Ser1008 the chain carries Phosphoserine. A compositionally biased stretch (polar residues) spans 1042–1059 (SNINEVGSSTNEVGSSIN). The segment at 1042-1062 (SNINEVGSSTNEVGSSINEVG) is disordered. Lys1079 is covalently cross-linked (Glycyl lysine isopeptide (Lys-Gly) (interchain with G-Cter in SUMO2)). Residues Ser1143, Ser1189, Ser1191, Ser1211, Ser1217, Ser1218, Ser1280, Ser1328, Ser1336, Ser1342, and Ser1387 each carry the phosphoserine modification. A disordered region spans residues 1323 to 1397 (RMRHQSESQG…QSEILTTQQR (75 aa)). Residues 1342–1360 (SDDEERGTGLEEDNQEEQS) show a composition bias toward acidic residues. Polar residues predominate over residues 1373 to 1397 (ESETSVSEDCSRLSSQSEILTTQQR). Thr1394 carries the post-translational modification Phosphothreonine. Positions 1397–1424 (RDTMQDNLIKLQQEMAELEAVLEQHGSQ) are interaction with PALB2. Phosphoserine is present on residues Ser1423, Ser1457, Ser1524, and Ser1542. The segment at 1442–1501 (LRNPEQSTSEKAVLTSQKSSEYPINQNPEGLSADKFEVSADSSTSKNKEPGVERSSPSKC) is disordered. Residues 1445–1470 (PEQSTSEKAVLTSQKSSEYPINQNPE) are compositionally biased toward polar residues. The segment at 1540 to 1618 (EKSGPHDLME…ESAQSPAAAH (79 aa)) is disordered. Polar residues predominate over residues 1607–1618 (VAESAQSPAAAH). 2 BRCT domains span residues 1642–1736 (STER…DFEV) and 1756–1855 (PDRK…TYLI).

In terms of assembly, heterodimer with BARD1. Part of the BRCA1-associated genome surveillance complex (BASC), which contains BRCA1, MSH2, MSH6, MLH1, ATM, BLM, PMS2 and the MRE11-RAD50-NBN protein (MRN) complex. This association could be a dynamic process changing throughout the cell cycle and within subnuclear domains. Component of the BRCA1-A complex, at least composed of BRCA1, BARD1, UIMC1/RAP80, ABRAXAS1, BRCC3/BRCC36, BABAM2 and BABAM1/NBA1. Interacts (via the BRCT domains) with ABRAXAS1 (phosphorylated form); this is important for recruitment to sites of DNA damage. Can form a heterotetramer with two molecules of ABRAXAS1 (phosphorylated form). Component of the BRCA1-RBBP8 complex. Interacts (via the BRCT domains) with RBBP8 ('Ser-327' phosphorylated form); the interaction ubiquitinates RBBP8, regulates CHEK1 activation, and involves RBBP8 in BRCA1-dependent G2/M checkpoint control on DNA damage. Associates with RNA polymerase II holoenzyme. Interacts with SMC1A, NELFB, DCLRE1C, CLSPN. CHEK1, CHEK2, BAP1, BRCC3, UBXN1 and PCLAF. Interacts (via BRCT domains) with BRIP1 (phosphorylated form). Interacts with FANCD2 (ubiquitinated form). Interacts with H2AX (phosphorylated on 'Ser-140'). Interacts (via the BRCT domains) with ACACA (phosphorylated form); the interaction prevents dephosphorylation of ACACA. Part of a BRCA complex containing BRCA1, BRCA2 and PALB2. Interacts directly with PALB2; the interaction is essential for its function in HRR. Interacts directly with BRCA2; the interaction occurs only in the presence of PALB2 which serves as the bridging protein. Interacts (via the BRCT domains) with LMO4; the interaction represses the transcriptional activity of BRCA1. Interacts (via the BRCT domains) with CCAR2 (via N-terminus); the interaction represses the transcriptional activator activity of BRCA1. Interacts with EXD2. Interacts (via C-terminus) with DHX9; this interaction is direct and links BRCA1 to the RNA polymerase II holoenzyme. Interacts with DNA helicase ZGRF1; the interaction is increased following DNA damage induction. Phosphorylated in response to IR, UV, and various stimuli that cause checkpoint activation, probably by ATM or ATR. Phosphorylation at Ser-987 by CHEK2 regulates mitotic spindle assembly. Phosphorylation by AURKA regulates centrosomal microtubule nucleation. In terms of processing, autoubiquitinated, undergoes 'Lys-6'-linked polyubiquitination. 'Lys-6'-linked polyubiquitination does not promote degradation.

Its subcellular location is the nucleus. It localises to the chromosome. The protein resides in the cytoplasm. It catalyses the reaction S-ubiquitinyl-[E2 ubiquitin-conjugating enzyme]-L-cysteine + [acceptor protein]-L-lysine = [E2 ubiquitin-conjugating enzyme]-L-cysteine + N(6)-ubiquitinyl-[acceptor protein]-L-lysine.. It functions in the pathway protein modification; protein ubiquitination. E3 ubiquitin-protein ligase that specifically mediates the formation of 'Lys-6'-linked polyubiquitin chains and plays a central role in DNA repair by facilitating cellular responses to DNA damage. It is unclear whether it also mediates the formation of other types of polyubiquitin chains. The BRCA1-BARD1 heterodimer coordinates a diverse range of cellular pathways such as DNA damage repair, ubiquitination and transcriptional regulation to maintain genomic stability. Regulates centrosomal microtubule nucleation. Required for appropriate cell cycle arrests after ionizing irradiation in both the S-phase and the G2 phase of the cell cycle. Required for FANCD2 targeting to sites of DNA damage. Inhibits lipid synthesis by binding to inactive phosphorylated ACACA and preventing its dephosphorylation. Contributes to homologous recombination repair (HRR) via its direct interaction with PALB2, fine-tunes recombinational repair partly through its modulatory role in the PALB2-dependent loading of BRCA2-RAD51 repair machinery at DNA breaks. Component of the BRCA1-RBBP8 complex which regulates CHEK1 activation and controls cell cycle G2/M checkpoints on DNA damage via BRCA1-mediated ubiquitination of RBBP8. Acts as a transcriptional activator. In Macaca mulatta (Rhesus macaque), this protein is Breast cancer type 1 susceptibility protein homolog (BRCA1).